We begin with the raw amino-acid sequence, 688 residues long: MLVLFLLLTIPTRAQRTTTETPKTEFIFRGFSGNQSNIVTTGAATIKLDGLLRLTDRNSNVTGTSFYHKPVRLLETNTSSTNSTIRSFSTSFVFVIIPTSSSNGGFGFTFTLSPTPDRTGAESAQYLGLLNKANDGNSTNHVFAVEFDTVQGFKDGADRTGNHIGLNFNSLTSDVQEPVVYYDNEDPNRKEDFPLQSGDPIRAILDYDGPTQTLNLTVYPANLKSRPVRPLISRPVPKLSQIVQEEMYVGFTAATGRDQSSAHYVMGWSFSSGGDLLTEDTLDLLELPRPPPNTAKKRGYNSQVLALIVALSGVTVILLALLFFFVMYKKRLQQGEVLEDWEINHPHRLRYKDLYAATDGFKENRIVGTGGFGTVFRGNLSSPSSDQIAVKKITPNSMQGVREFIAEIESLGRLRHKNLVNLQGWCKQKNDLLLIYDYIPNGSLDSLLYSRPRQSGVVLSWNARFKIAKGIASGLLYLHEEWEKVVIHRDIKPSNVLIEDDMNPRLGDFGLARLYERGSQSNTTVVVGTIGYMAPELARNGKSSSASDVFAFGVLLLEIVSGRRPTDSGTFFLADWVMELHARGEILHAVDPRLGFGYDGVEARLALVVGLLCCHQRPTSRPSMRTVLRYLNGDDDVPEIDNDWGYSDSSRSDLGSNFEGYVSSDRASSSVPSFSVTRVSSSSVISGR.

Residues Met-1–Ala-14 form the signal peptide. At Gln-15 to Ala-306 the chain is on the extracellular side. A legume-lectin like region spans residues Pro-22–Ser-271. The chain crosses the membrane as a helical span at residues Leu-307–Met-327. Over Tyr-328–Arg-688 the chain is Cytoplasmic. The Protein kinase domain maps to Phe-361–Ile-640. ATP-binding positions include Val-367–Val-375 and Lys-391. The active-site Proton acceptor is Asp-490. The segment at Val-662 to Arg-688 is disordered.

This sequence in the C-terminal section; belongs to the protein kinase superfamily. Ser/Thr protein kinase family. It in the N-terminal section; belongs to the leguminous lectin family.

It is found in the cell membrane. The enzyme catalyses L-seryl-[protein] + ATP = O-phospho-L-seryl-[protein] + ADP + H(+). The catalysed reaction is L-threonyl-[protein] + ATP = O-phospho-L-threonyl-[protein] + ADP + H(+). In terms of biological role, involved in negative regulation of abscisic acid response in seed germination. The sequence is that of Lectin-domain containing receptor kinase VI.3 (LECRK63) from Arabidopsis thaliana (Mouse-ear cress).